The sequence spans 260 residues: Ribosomal RNA small subunit methyltransferase A (260 aa).

S-adenosyl-L-methionine-binding residues include leucine 23, glycine 48, glutamate 69, aspartate 94, and asparagine 110.

The protein belongs to the class I-like SAM-binding methyltransferase superfamily. rRNA adenine N(6)-methyltransferase family. RsmA subfamily.

It localises to the cytoplasm. It carries out the reaction adenosine(1518)/adenosine(1519) in 16S rRNA + 4 S-adenosyl-L-methionine = N(6)-dimethyladenosine(1518)/N(6)-dimethyladenosine(1519) in 16S rRNA + 4 S-adenosyl-L-homocysteine + 4 H(+). Specifically dimethylates two adjacent adenosines (A1518 and A1519) in the loop of a conserved hairpin near the 3'-end of 16S rRNA in the 30S particle. May play a critical role in biogenesis of 30S subunits. The sequence is that of Ribosomal RNA small subunit methyltransferase A from Thermotoga petrophila (strain ATCC BAA-488 / DSM 13995 / JCM 10881 / RKU-1).